A 495-amino-acid polypeptide reads, in one-letter code: MKSPVSDLAPSDGEEGSDRTPLLQRAPRAEPAPVCCSARYNLAFLSFFGFFVLYSLRVNLSVALVDMVDSNTTAKDNRTSYECAEHSAPIKVLHNQTGKKYRWDAETQGWILGSFFYGYIITQIPGGYVASRSGGKLLLGFGIFATAIFTLFTPLAADFGVGALVALRALEGLGEGVTYPAMHAMWSSWAPPLERSKLLSISYAGAQLGTVVSLPLSGVICYYMNWTYVFYFFGIVGIIWFILWICLVSDTPETHKTITPYEKEYILSSLKNQLSSQKSVPWIPMLKSLPLWAIVVAHFSYNWTFYTLLTLLPTYMKEVLRFNIQENGFLSAVPYLGCWLCMILSGQAADNLRARWNFSTLWVRRVFSLIGMIGPAIFLVAAGFIGCDYSLAVAFLTISTTLGGFCSSGFSINHLDIAPSYAGILLGITNTFATIPGMIGPIIARSLTPENTIGEWQTVFCIAAAINVFGAIFFTLFAKGEVQNWAISDHQGHRN.

Positions M1–Q24 are disordered. S3 is subject to Phosphoserine. The Dileucine internalization motif signature appears at L22–L23. The helical transmembrane segment at L42 to V62 threads the bilayer. Residues N71, N77, and N95 are each glycosylated (N-linked (GlcNAc...) asparagine). 11 helical membrane passes run W110–A130, L137–A157, F159–Y179, I201–C221, Y228–V248, L289–L309, F329–A349, V366–G386, A392–I412, I424–A444, and T458–A478.

It belongs to the major facilitator superfamily. Sodium/anion cotransporter family. Significantly expressed in lung endothelial cells, and much less in liver.

It is found in the basolateral cell membrane. The protein resides in the cytoplasmic vesicle. Its subcellular location is the secretory vesicle. The protein localises to the synaptic vesicle membrane. It localises to the lysosome membrane. The enzyme catalyses N-acetylneuraminate(in) + H(+)(in) = N-acetylneuraminate(out) + H(+)(out). It carries out the reaction D-glucuronate(out) + H(+)(out) = D-glucuronate(in) + H(+)(in). The catalysed reaction is 2 nitrate(out) + H(+)(out) = 2 nitrate(in) + H(+)(in). It catalyses the reaction L-aspartate(out) = L-aspartate(in). The enzyme catalyses L-glutamate(out) = L-glutamate(in). It carries out the reaction N-acetyl-L-aspartyl-L-glutamate(out) = N-acetyl-L-aspartyl-L-glutamate(in). Functionally, multifunctional anion transporter that operates via two distinct transport mechanisms, namely proton-coupled anion cotransport and membrane potential-dependent anion transport. Electroneutral proton-coupled acidic monosaccharide symporter, with a sugar to proton stoichiometry of 1:1. Exports glucuronic acid and free sialic acid derived from sialoglycoconjugate degradation out of lysosomes, driven by outwardly directed lysosomal pH gradient. May regulate lysosome function and metabolism of sialylated conjugates that impact oligodendrocyte lineage differentiation and myelinogenesis in the central nervous system. Electrogenic proton-coupled nitrate symporter that transports nitrate ions across the basolateral membrane of salivary gland acinar cells, with nitrate to proton stoichiometry of 2:1. May contribute to nitrate clearance from serum by salivary glands, where it is further concentrated and secreted in the saliva. Uses membrane potential to drive the uptake of acidic amino acids and peptides into synaptic vesicles. Responsible for synaptic vesicular storage of L-aspartate and L-glutamate in pinealocytes as well as vesicular uptake of N-acetyl-L-aspartyl-L-glutamate neuropeptide, relevant to aspartegic-associated glutamatergic neurotransmission and activation of metabotropic receptors that inhibit subsequent transmitter release. Its function is as follows. Receptor for CM101, a polysaccharide produced by group B Streptococcus with antipathoangiogenic properties. The sequence is that of Sialin (SLC17A5) from Ovis aries (Sheep).